We begin with the raw amino-acid sequence, 319 residues long: ATP-dependent 6-phosphofructokinase (319 aa).

ATP is bound at residue G11. Position 21-25 (21-25 (RAVVR)) interacts with ADP. Residues 72 to 73 (RC) and 102 to 105 (GDGS) each bind ATP. D103 is a Mg(2+) binding site. 125–127 (TID) provides a ligand contact to substrate. The active-site Proton acceptor is D127. R154 contacts ADP. Substrate is bound by residues R162 and 169 to 171 (MGR). Residues 185 to 187 (GAE), K211, and 213 to 215 (KMH) contribute to the ADP site. Substrate contacts are provided by residues E222, R243, and 249–252 (HIQR).

It belongs to the phosphofructokinase type A (PFKA) family. ATP-dependent PFK group I subfamily. Prokaryotic clade 'B1' sub-subfamily. In terms of assembly, homotetramer. Requires Mg(2+) as cofactor.

The protein localises to the cytoplasm. The enzyme catalyses beta-D-fructose 6-phosphate + ATP = beta-D-fructose 1,6-bisphosphate + ADP + H(+). It functions in the pathway carbohydrate degradation; glycolysis; D-glyceraldehyde 3-phosphate and glycerone phosphate from D-glucose: step 3/4. Its activity is regulated as follows. Allosterically activated by ADP and other diphosphonucleosides, and allosterically inhibited by phosphoenolpyruvate. Functionally, catalyzes the phosphorylation of D-fructose 6-phosphate to fructose 1,6-bisphosphate by ATP, the first committing step of glycolysis. The sequence is that of ATP-dependent 6-phosphofructokinase from Clostridium botulinum (strain ATCC 19397 / Type A).